Reading from the N-terminus, the 672-residue chain is Putative sodium/calcium exchanger 7 (672 aa).

Positions 1–23 are cleaved as a signal peptide; that stretch reads MAQPSILFSLTLIFLISIKSCDA. Helical transmembrane passes span 88–108, 130–150, 164–184, 196–216, 221–241, 451–471, 479–499, 522–542, 551–571, 581–601, 620–640, and 649–669; these read VILI…VSSA, VAGV…GSIA, LGEL…TIIL, IRDL…FVFY, LWMP…VIGA, LTLL…QFFL, PGLW…IMVF, IAWI…LGVV, GLTI…VSVV, AAAI…PFTI, LILF…VQKF, and VLIS…TGVL.

It belongs to the Ca(2+):cation antiporter (CaCA) (TC 2.A.19) family.

It localises to the membrane. This chain is Putative sodium/calcium exchanger 7 (ncx-7), found in Caenorhabditis elegans.